A 138-amino-acid chain; its full sequence is Putative membrane protein ORF6 (138 aa).

The next 2 membrane-spanning stretches (helical) occupy residues 4-20 (LTII…HAVL) and 37-53 (VVVL…LMTI).

The protein localises to the membrane. The polypeptide is Putative membrane protein ORF6 (ORF6) (Ictalurid herpesvirus 1 (strain Auburn) (IcHV-1)).